Here is a 485-residue protein sequence, read N- to C-terminus: Amino acid permease 1 (485 aa).

A compositionally biased stretch (polar residues) spans M1 to E15. Positions M1–E35 are disordered. Residues M1 to T40 are Cytoplasmic-facing. 2 consecutive transmembrane segments (helical) span residues W41–A61 and W62–I82. Topologically, residues T83–Y129 are cytoplasmic. The helical transmembrane segment at G130–V150 threads the bilayer. At G151–T166 the chain is on the extracellular side. A helical membrane pass occupies residues I167–P187. Topologically, residues N188–F194 are cytoplasmic. The chain crosses the membrane as a helical span at residues L195 to I215. Topologically, residues A216–R245 are extracellular. Residues S246–I266 traverse the membrane as a helical segment. The Cytoplasmic segment spans residues Q267–L285. Residues V286–F306 form a helical membrane-spanning segment. The Extracellular segment spans residues G307–F318. The helical transmembrane segment at G319–I339 threads the bilayer. The Cytoplasmic portion of the chain corresponds to G340–Y394. The next 2 membrane-spanning stretches (helical) occupy residues V395–I415 and G416–T436. Residues K437–T450 lie on the Cytoplasmic side of the membrane. The helical transmembrane segment at M451–I471 threads the bilayer. Over S472–E485 the chain is Extracellular.

Belongs to the amino acid/polyamine transporter 2 family. Amino acid/auxin permease (AAAP) (TC 2.A.18.2) subfamily. In terms of tissue distribution, highly expressed in developing pods. Found in the endosperm and in the storage parenchyma and the outer epidermis cells of the developing embryo. Lower levels of expression in flowers, in the vascular system of the cotyledon and in the root epidermal cells, including root hairs and throughout the root tip.

Its subcellular location is the cell membrane. With respect to regulation, inhibited by carbonylcyanide m-chlorophenylhydrazone and diethylpyrocarbonate (DEPC). Amino acid-proton symporter. Stereospecific transporter with a broad specificity for histidine, glutamate and neutral amino acids. Reduced affinities for asparagine and valine. Involved in amino acid uptake from the apoplastic cavity into the embryo cells for storage protein accumulation and in root amino acid uptake. The sequence is that of Amino acid permease 1 (AAP1) from Arabidopsis thaliana (Mouse-ear cress).